The sequence spans 312 residues: Tyrosine recombinase XerC (312 aa).

The Core-binding (CB) domain maps to 10 to 101 (PDLQAARESW…GIRSLLRFLE (92 aa)). The region spanning 122–306 (SLPKPLTASD…DTARLLEIYE (185 aa)) is the Tyr recombinase domain. Active-site residues include R165, K190, H258, R261, and H284. The active-site O-(3'-phospho-DNA)-tyrosine intermediate is Y293.

This sequence belongs to the 'phage' integrase family. XerC subfamily. In terms of assembly, forms a cyclic heterotetrameric complex composed of two molecules of XerC and two molecules of XerD.

The protein localises to the cytoplasm. Its function is as follows. Site-specific tyrosine recombinase, which acts by catalyzing the cutting and rejoining of the recombining DNA molecules. The XerC-XerD complex is essential to convert dimers of the bacterial chromosome into monomers to permit their segregation at cell division. It also contributes to the segregational stability of plasmids. In Mesorhizobium japonicum (strain LMG 29417 / CECT 9101 / MAFF 303099) (Mesorhizobium loti (strain MAFF 303099)), this protein is Tyrosine recombinase XerC.